The primary structure comprises 498 residues: NADP-dependent glyceraldehyde-3-phosphate dehydrogenase (498 aa).

Residues arginine 118 and 171 to 172 contribute to the substrate site; that span reads NY. 3 residues coordinate NADP(+): lysine 194, threonine 197, and aspartate 232. 247–251 contacts NAD(+); the sequence is GGDTG. The active-site Proton acceptor is glutamate 266. 299 to 301 contributes to the substrate binding site; the sequence is RCT. Cysteine 300 acts as the Nucleophile in catalysis. Glutamate 393 serves as a coordination point for NADP(+). A substrate-binding site is contributed by arginine 453.

The protein belongs to the aldehyde dehydrogenase family.

Its subcellular location is the cytoplasm. It catalyses the reaction D-glyceraldehyde 3-phosphate + NADP(+) + H2O = (2R)-3-phosphoglycerate + NADPH + 2 H(+). Its function is as follows. Important as a means of generating NADPH for biosynthetic reactions. The chain is NADP-dependent glyceraldehyde-3-phosphate dehydrogenase (GPN1) from Zea mays (Maize).